The chain runs to 380 residues: Acyl-coenzyme A diphosphatase NUDT19 (380 aa).

In terms of domain architecture, Nudix hydrolase spans 8–264 (WKEAATLIVA…KIWIPPPQFY (257 aa)). Positions 115 to 136 (SLIPGEVATRICAIRETFEESG) match the Nudix box motif. Mg(2+)-binding residues include glutamate 130 and glutamate 134. A Microbody targeting signal motif is present at residues 378 to 380 (NKL).

This sequence belongs to the Nudix hydrolase family. In terms of assembly, monomer. Requires Mg(2+) as cofactor. The cofactor is Mn(2+).

It localises to the peroxisome. It carries out the reaction an acyl-CoA + H2O = an acyl-4'-phosphopantetheine + adenosine 3',5'-bisphosphate + 2 H(+). It catalyses the reaction CoA + H2O = (R)-4'-phosphopantetheine + adenosine 3',5'-bisphosphate + 2 H(+). The enzyme catalyses hexanoyl-CoA + H2O = hexanoyl-4'-phosphopantetheine + adenosine 3',5'-bisphosphate + 2 H(+). The catalysed reaction is octanoyl-CoA + H2O = S-octanoyl-4'-phosphopantetheine + adenosine 3',5'-bisphosphate + 2 H(+). It carries out the reaction butanoyl-CoA + H2O = S-butanoyl-4'-phosphopantetheine + adenosine 3',5'-bisphosphate + 2 H(+). It catalyses the reaction propanoyl-CoA + H2O = propanoyl-4'-phosphopantetheine + adenosine 3',5'-bisphosphate + 2 H(+). The enzyme catalyses malonyl-CoA + H2O = malonyl-4'-phosphopantetheine + adenosine 3',5'-bisphosphate + 2 H(+). The catalysed reaction is succinyl-CoA + H2O = succinyl-4'-phosphopantetheine + adenosine 3',5'-bisphosphate + 2 H(+). It carries out the reaction choloyl-CoA + H2O = S-choloyl-4'-phosphopantetheine + adenosine 3',5'-bisphosphate + 2 H(+). It catalyses the reaction 4,8-dimethylnonanoyl-CoA + H2O = S-(4,8-dimethylnonanoyl)-4'-phosphopantetheine + adenosine 3',5'-bisphosphate + 2 H(+). The enzyme catalyses (9Z,12Z,15Z)-octadecatrienoyl-CoA + H2O = S-(9Z,12Z,15Z-octadecatrienoyl)-4'-phosphopantetheine + adenosine 3',5'-bisphosphate + 2 H(+). The catalysed reaction is (9Z,12Z)-octadecadienoyl-CoA + H2O = S-(9Z,12Z-octadecadienoyl)-4'-phosphopantetheine + adenosine 3',5'-bisphosphate + 2 H(+). It carries out the reaction (9Z)-hexadecenoyl-CoA + H2O = S-(9Z-hexadecenoyl)-4'-phosphopantetheine + adenosine 3',5'-bisphosphate + 2 H(+). It catalyses the reaction (9Z)-tetradecenoyl-CoA + H2O = S-(9Z-tetradecenoyl)-4'-phosphopantetheine + adenosine 3',5'-bisphosphate + 2 H(+). The enzyme catalyses (6Z)-octenoyl-CoA + H2O = S-(6Z-octenoyl)-4'-phosphopantetheine + adenosine 3',5'-bisphosphate + 2 H(+). The catalysed reaction is hexadecanoyl-CoA + H2O = S-hexadecanoyl-4'-phosphopantetheine + adenosine 3',5'-bisphosphate + 2 H(+). It carries out the reaction tetradecanoyl-CoA + H2O = tetradecanoyl-4'-phosphopantetheine + adenosine 3',5'-bisphosphate + 2 H(+). It catalyses the reaction dodecanoyl-CoA + H2O = S-dodecanoyl-4'-phosphopantetheine + adenosine 3',5'-bisphosphate + 2 H(+). The enzyme catalyses a 5'-end CoA-ribonucleoside in mRNA + H2O = a 5'-end phospho-adenosine-phospho-ribonucleoside in mRNA + (R)-4'-phosphopantetheine + 2 H(+). In terms of biological role, fatty acyl-coenzyme A (CoA) diphosphatase that hydrolyzes fatty acyl-CoA to yield acyl-4'-phosphopantetheine and adenosine 3',5'-bisphosphate. Mediates the hydrolysis of a wide range of CoA esters, including choloyl-CoA and branched-chain fatty-acyl-CoA esters and at low substrate concentrations medium and long-chain fatty-acyl-CoA esters are the primary substrates. Highest activity seen with medium-chain acyl-CoA esters and higher rates of activity seen with the unsaturated acyl-CoA esters compared with the saturated esters. Exhibits decapping activity towards dpCoA-capped RNAs in vitro. The sequence is that of Acyl-coenzyme A diphosphatase NUDT19 (nudt19) from Xenopus laevis (African clawed frog).